The primary structure comprises 449 residues: C4-dicarboxylate transport protein (449 aa).

The next 8 membrane-spanning stretches (helical) occupy residues 18–38 (PFYL…ALLG), 61–81 (MIIS…VAHV), 93–113 (VYFL…AHVV), 159–179 (FVGD…IALA), 202–222 (LVQM…AFTI), 244–264 (SLLF…FSIL), 346–366 (LFLV…AGFI), and 369–389 (AATL…ILGV).

This sequence belongs to the dicarboxylate/amino acid:cation symporter (DAACS) (TC 2.A.23) family.

Its subcellular location is the cell inner membrane. Responsible for the transport of dicarboxylates such as succinate, fumarate, and malate from the periplasm across the membrane. In Xylella fastidiosa (strain M23), this protein is C4-dicarboxylate transport protein.